Consider the following 321-residue polypeptide: Phosphate metabolism protein 8 (321 aa).

It belongs to the SSM1 family.

Its function is as follows. May be involved in phosphate metabolism. This Saccharomyces cerevisiae (strain ATCC 204508 / S288c) (Baker's yeast) protein is Phosphate metabolism protein 8 (PHM8).